We begin with the raw amino-acid sequence, 427 residues long: Trigger factor (427 aa).

The 86-residue stretch at 163 to 248 folds into the PPIase FKBP-type domain; sequence GDTVILDFEG…LHEIKTKEVP (86 aa).

Belongs to the FKBP-type PPIase family. Tig subfamily.

It localises to the cytoplasm. It carries out the reaction [protein]-peptidylproline (omega=180) = [protein]-peptidylproline (omega=0). Involved in protein export. Acts as a chaperone by maintaining the newly synthesized protein in an open conformation. Functions as a peptidyl-prolyl cis-trans isomerase. The sequence is that of Trigger factor from Listeria innocua serovar 6a (strain ATCC BAA-680 / CLIP 11262).